The chain runs to 92 residues: Small ribosomal subunit protein uS19 (92 aa).

Functionally, protein S19 forms a complex with S13 that binds strongly to the 16S ribosomal RNA. The polypeptide is Small ribosomal subunit protein uS19 (Rhodopseudomonas palustris (strain ATCC BAA-98 / CGA009)).